Here is a 174-residue protein sequence, read N- to C-terminus: Small t antigen (174 aa).

N-acetylmethionine; by host is present on methionine 1. The region spanning 12–75 (QLMDLLGLER…VKYAHQPDFG (64 aa)) is the J domain. The C4-type; atypical zinc finger occupies 103–116 (CAKKMSANCICLLC). The segment at 122–143 (HENRKLYRKDPLVWVDCYCFDC) adopts an H1C3-type; atypical zinc-finger fold.

In terms of assembly, interacts with host PPP2R1A; the interaction inhibits PP2A activity.

It is found in the host cytoplasm. It localises to the host nucleus. Functionally, promotes efficient viral genome replication by accelerating both G1 and S phase progression of the cell cycle. Inhibits host PP2A by binding to the A subunit, thereby displacing lower affinity regulatory B subunit. Inactivation of PP2A in turn results in the transactivation of cyclin A and cyclin D1 promoters. Late during the infection cycle, ST may induce dephosphorylation of host eIF4E-binding protein EIF4EBP1 leading to the inhibition of cap-dependent translation. May establish and maintain high levels of viral genomes during persistent infection in cell culture. In Simian virus 40 (SV40), this protein is Small t antigen.